Consider the following 124-residue polypeptide: Small ribosomal subunit protein bS6 (124 aa).

Residues 105–115 are compositionally biased toward basic and acidic residues; sequence EVQHEEARKSA. The segment at 105–124 is disordered; the sequence is EVQHEEARKSAQSDAPVAAA.

This sequence belongs to the bacterial ribosomal protein bS6 family.

Its function is as follows. Binds together with bS18 to 16S ribosomal RNA. The protein is Small ribosomal subunit protein bS6 of Polynucleobacter necessarius subsp. necessarius (strain STIR1).